Here is a 365-residue protein sequence, read N- to C-terminus: Phospho-N-acetylmuramoyl-pentapeptide-transferase (365 aa).

Transmembrane regions (helical) follow at residues 15–35 (WPAA…DRLI), 39–59 (LLSL…WWGV), 84–104 (GTPT…GGLV), 114–134 (LLAI…DDWS), 156–176 (AAVL…TVSL), 178–198 (FNLD…VFLA), 209–229 (LDGL…LQLM), 235–255 (GDPA…GFLI), 263–283 (VFMG…VALL), 291–311 (LLMG…VWVF), and 343–363 (VVVP…LGLH).

The protein belongs to the glycosyltransferase 4 family. MraY subfamily. It depends on Mg(2+) as a cofactor.

It is found in the cell inner membrane. It carries out the reaction UDP-N-acetyl-alpha-D-muramoyl-L-alanyl-gamma-D-glutamyl-meso-2,6-diaminopimeloyl-D-alanyl-D-alanine + di-trans,octa-cis-undecaprenyl phosphate = di-trans,octa-cis-undecaprenyl diphospho-N-acetyl-alpha-D-muramoyl-L-alanyl-D-glutamyl-meso-2,6-diaminopimeloyl-D-alanyl-D-alanine + UMP. It participates in cell wall biogenesis; peptidoglycan biosynthesis. Catalyzes the initial step of the lipid cycle reactions in the biosynthesis of the cell wall peptidoglycan: transfers peptidoglycan precursor phospho-MurNAc-pentapeptide from UDP-MurNAc-pentapeptide onto the lipid carrier undecaprenyl phosphate, yielding undecaprenyl-pyrophosphoryl-MurNAc-pentapeptide, known as lipid I. The chain is Phospho-N-acetylmuramoyl-pentapeptide-transferase from Synechococcus sp. (strain WH7803).